The primary structure comprises 345 residues: Selenide, water dikinase (345 aa).

Residue C16 is part of the active site. Residues K19 and 46-48 each bind ATP; that span reads TSD. D49 contacts Mg(2+). ATP is bound by residues D66, D89, and 136–138; that span reads GHT. Residue D89 coordinates Mg(2+). A Mg(2+)-binding site is contributed by D224.

It belongs to the selenophosphate synthase 1 family. Class I subfamily. In terms of assembly, homodimer. Mg(2+) is required as a cofactor.

The catalysed reaction is hydrogenselenide + ATP + H2O = selenophosphate + AMP + phosphate + 2 H(+). In terms of biological role, synthesizes selenophosphate from selenide and ATP. The sequence is that of Selenide, water dikinase from Clostridium botulinum (strain Eklund 17B / Type B).